Here is a 392-residue protein sequence, read N- to C-terminus: Vascular endothelial growth factor A, long form (392 aa).

2 disordered regions span residues 1 to 44 and 73 to 174; these read MTDR…VEGV and DKPI…GPGR. Basic and acidic residues predominate over residues 89–104; that stretch reads PGPEKRGEEEKEEERG. Low complexity-rich tracts occupy residues 121-143 and 158-174; these read AAVCADSAPAARAPQAPARASVP and PRSPSRRGSASRAGPGR. Intrachain disulfides connect C229-C271, C260-C305, and C264-C307. N-linked (GlcNAc...) asparagine glycosylation occurs at N278. Residues 309–320 show a composition bias toward basic and acidic residues; sequence PKKDRTKPEKKS. Residues 309–337 are disordered; sequence PKKDRTKPEKKSVRGKGKGQKRKRKKSRF. The segment covering 321–337 has biased composition (basic residues); that stretch reads VRGKGKGQKRKRKKSRF.

The protein belongs to the PDGF/VEGF growth factor family. As to quaternary structure, homodimer; disulfide-linked. Also found as heterodimer with PGF. Interacts with NRP1. Interacts with isoform 2 of BSG. Interacts with CD82; this interaction inhibits VEGFA-mediated signaling pathway. In terms of processing, produced by use of an alternative upstream CUG codon and post-translationally processed into the N-terminal N-VEGF form and the C-terminal secreted VEGFA form. In terms of tissue distribution, in developing embryos, expressed mainly in the choroid plexus, paraventricular neuroepithelium, placenta and kidney glomeruli. Also found in bronchial epithelium, adrenal gland and in seminiferous tubules of testis. High expression continues in kidney glomeruli and choroid plexus in adults.

It localises to the cytoplasm. The protein resides in the nucleus. The protein localises to the secreted. It is found in the endoplasmic reticulum. Its subcellular location is the golgi apparatus. It localises to the extracellular space. The protein resides in the extracellular matrix. The protein localises to the cell membrane. Participates in the induction of key genes involved in the response to hypoxia and in the induction of angiogenesis such as HIF1A. Involved in protecting cells from hypoxia-mediated cell death. In terms of biological role, growth factor active in angiogenesis, vasculogenesis and endothelial cell growth. Induces endothelial cell proliferation, promotes cell migration, inhibits apoptosis and induces permeabilization of blood vessels. Binds to the FLT1/VEGFR1 and KDR/VEGFR2 receptors, heparan sulfate and heparin. Binds to the NRP1/neuropilin-1 receptor. Binding to NRP1 receptor initiates a signaling pathway needed for motor neuron axon guidance and cell body migration, including for the caudal migration of facial motor neurons from rhombomere 4 to rhombomere 6 during embryonic development. Also binds the DEAR/FBXW7-AS1 receptor. May play a role in increasing vascular permeability during lactation, when increased transport of molecules from the blood is required for efficient milk protein synthesis. In Mus musculus (Mouse), this protein is Vascular endothelial growth factor A, long form (Vegfa).